We begin with the raw amino-acid sequence, 120 residues long: uncharacterized protein (120 aa).

Residues cysteine 70–lysine 109 form an RING-type zinc finger.

This is an uncharacterized protein from Orgyia pseudotsugata multicapsid polyhedrosis virus (OpMNPV).